Reading from the N-terminus, the 229-residue chain is NAD(P)H-hydrate epimerase (229 aa).

One can recognise a YjeF N-terminal domain in the interval 10 to 217 (AINVDQELFN…ALQRKYDLNL (208 aa)). 60-64 (NNGGD) is a binding site for (6S)-NADPHX. 2 residues coordinate K(+): Asn-61 and Asp-125. (6S)-NADPHX contacts are provided by residues 129 to 135 (GFSFKPP) and Asp-158. Ser-161 lines the K(+) pocket.

It belongs to the NnrE/AIBP family. K(+) serves as cofactor.

It catalyses the reaction (6R)-NADHX = (6S)-NADHX. It carries out the reaction (6R)-NADPHX = (6S)-NADPHX. In terms of biological role, catalyzes the epimerization of the S- and R-forms of NAD(P)HX, a damaged form of NAD(P)H that is a result of enzymatic or heat-dependent hydration. This is a prerequisite for the S-specific NAD(P)H-hydrate dehydratase to allow the repair of both epimers of NAD(P)HX. This is NAD(P)H-hydrate epimerase from Drosophila ananassae (Fruit fly).